Consider the following 213-residue polypeptide: Uridine kinase (213 aa).

15–22 (GASASGKS) serves as a coordination point for ATP.

The protein belongs to the uridine kinase family.

It is found in the cytoplasm. The catalysed reaction is uridine + ATP = UMP + ADP + H(+). It carries out the reaction cytidine + ATP = CMP + ADP + H(+). Its pathway is pyrimidine metabolism; CTP biosynthesis via salvage pathway; CTP from cytidine: step 1/3. It participates in pyrimidine metabolism; UMP biosynthesis via salvage pathway; UMP from uridine: step 1/1. This chain is Uridine kinase, found in Yersinia pseudotuberculosis serotype O:1b (strain IP 31758).